Here is a 142-residue protein sequence, read N- to C-terminus: Large ribosomal subunit protein uL16 (142 aa).

This sequence belongs to the universal ribosomal protein uL16 family. In terms of assembly, part of the 50S ribosomal subunit.

Functionally, binds 23S rRNA and is also seen to make contacts with the A and possibly P site tRNAs. The sequence is that of Large ribosomal subunit protein uL16 from Mycoplasmopsis pulmonis (strain UAB CTIP) (Mycoplasma pulmonis).